Reading from the N-terminus, the 489-residue chain is Mitochondrial-processing peptidase subunit beta (489 aa).

Residues 1 to 43 constitute a mitochondrion transit peptide; sequence MAAAAARVVLSSAARRRLWGFSESLLIRGAAGRSLYFGENRLR. A Zn(2+)-binding site is contributed by His-101. Glu-104 serves as the catalytic Proton acceptor. Positions 105 and 181 each coordinate Zn(2+).

The protein belongs to the peptidase M16 family. In terms of assembly, heterodimer of PMPCA (alpha) and PMPCB (beta) subunits, forming the mitochondrial processing protease (MPP) in which PMPCA is involved in substrate recognition and binding and PMPCB is the catalytic subunit. The cofactor is Zn(2+).

It localises to the mitochondrion matrix. It catalyses the reaction Release of N-terminal transit peptides from precursor proteins imported into the mitochondrion, typically with Arg in position P2.. Its activity is regulated as follows. Binding to PMPCA is required for catalytic activity. In terms of biological role, catalytic subunit of the essential mitochondrial processing protease (MPP), which cleaves the mitochondrial sequence off newly imported precursors proteins. Preferentially, cleaves after an arginine at position P2. Required for PINK1 turnover by coupling PINK1 mitochondrial import and cleavage, which results in subsequent PINK1 proteolysis. This Homo sapiens (Human) protein is Mitochondrial-processing peptidase subunit beta (PMPCB).